Consider the following 507-residue polypeptide: Ribonuclease Y (507 aa).

The helical transmembrane segment at 1 to 21 (MLWYIVAGAGGLLIGYLIANY) threads the bilayer. Positions 197-282 (TVSTVSLPSD…EMYEKAKQEV (86 aa)) constitute a KH domain. One can recognise an HD domain in the interval 323 to 416 (VLNHSIEVAL…VAAADALSAA (94 aa)).

The protein belongs to the RNase Y family.

The protein resides in the cell membrane. In terms of biological role, endoribonuclease that initiates mRNA decay. This chain is Ribonuclease Y, found in Thermotoga sp. (strain RQ2).